The primary structure comprises 545 residues: Chaperonin GroEL 1 (545 aa).

ATP-binding positions include 29–32 (TLGP), 86–90 (DGTTT), glycine 413, 479–481 (DAA), and aspartate 495. Positions 525-545 (PEPKENNPAGSGAGMGGDFDY) are disordered. Residues 535–545 (SGAGMGGDFDY) are compositionally biased toward gly residues.

This sequence belongs to the chaperonin (HSP60) family. Forms a cylinder of 14 subunits composed of two heptameric rings stacked back-to-back. Interacts with the co-chaperonin GroES.

The protein resides in the cytoplasm. It carries out the reaction ATP + H2O + a folded polypeptide = ADP + phosphate + an unfolded polypeptide.. Functionally, together with its co-chaperonin GroES, plays an essential role in assisting protein folding. The GroEL-GroES system forms a nano-cage that allows encapsulation of the non-native substrate proteins and provides a physical environment optimized to promote and accelerate protein folding. In Thermostichus vulcanus (Synechococcus vulcanus), this protein is Chaperonin GroEL 1.